A 465-amino-acid polypeptide reads, in one-letter code: Fumarate hydratase class II (465 aa).

Substrate-binding positions include 99-101, 130-133, 140-142, and T188; these read SGT, HPND, and STN. The active-site Proton donor/acceptor is the H189. S319 is an active-site residue. Substrate-binding positions include S320 and 325–327; that span reads KVN.

It belongs to the class-II fumarase/aspartase family. Fumarase subfamily. As to quaternary structure, homotetramer.

The protein localises to the cytoplasm. It catalyses the reaction (S)-malate = fumarate + H2O. It functions in the pathway carbohydrate metabolism; tricarboxylic acid cycle; (S)-malate from fumarate: step 1/1. In terms of biological role, involved in the TCA cycle. Catalyzes the stereospecific interconversion of fumarate to L-malate. This chain is Fumarate hydratase class II, found in Prochlorococcus marinus (strain SARG / CCMP1375 / SS120).